Reading from the N-terminus, the 242-residue chain is Transcriptional regulatory protein btr (242 aa).

Residues Met-158–Pro-231 form the HTH crp-type domain. Residues Arg-191 to Ser-210 constitute a DNA-binding region (H-T-H motif).

May regulate gene expression in response to changes in oxygen levels or to changes in the redox potential of the bacterial environment. This chain is Transcriptional regulatory protein btr (btr), found in Bordetella pertussis (strain Tohama I / ATCC BAA-589 / NCTC 13251).